A 346-amino-acid polypeptide reads, in one-letter code: Lipooligosaccharide heptosyltransferase 2 (346 aa).

The protein belongs to the glycosyltransferase 9 family.

It catalyses the reaction an L-alpha-D-Hep-(1-&gt;5)-[alpha-Kdo-(2-&gt;4)]-alpha-Kdo-(2-&gt;6)-lipid A + ADP-L-glycero-beta-D-manno-heptose = an L-alpha-D-Hep-(1-&gt;3)-L-alpha-D-Hep-(1-&gt;5)-[alpha-Kdo-(2-&gt;4)]-alpha-Kdo-(2-&gt;6)-lipid A + ADP + H(+). It participates in bacterial outer membrane biogenesis; LOS core biosynthesis. Glycosyltransferase involved in the biosynthesis of the core oligosaccharide region of lipooligosaccharide (LOS). Catalyzes the addition of a heptose unit to the heptosyl-Kdo2-lipid A module. The sequence is that of Lipooligosaccharide heptosyltransferase 2 (waaF) from Haemophilus influenzae (strain ATCC 51907 / DSM 11121 / KW20 / Rd).